Reading from the N-terminus, the 560-residue chain is DNA ligase B (560 aa).

Residue K124 is the N6-AMP-lysine intermediate of the active site.

The protein belongs to the NAD-dependent DNA ligase family. LigB subfamily.

It catalyses the reaction NAD(+) + (deoxyribonucleotide)n-3'-hydroxyl + 5'-phospho-(deoxyribonucleotide)m = (deoxyribonucleotide)n+m + AMP + beta-nicotinamide D-nucleotide.. Functionally, catalyzes the formation of phosphodiester linkages between 5'-phosphoryl and 3'-hydroxyl groups in double-stranded DNA using NAD as a coenzyme and as the energy source for the reaction. This is DNA ligase B from Shigella flexneri serotype 5b (strain 8401).